Consider the following 68-residue polypeptide: Large ribosomal subunit protein uL29 (68 aa).

It belongs to the universal ribosomal protein uL29 family.

In Picosynechococcus sp. (strain ATCC 27264 / PCC 7002 / PR-6) (Agmenellum quadruplicatum), this protein is Large ribosomal subunit protein uL29.